A 389-amino-acid chain; its full sequence is Brix domain-containing protein C1B9.03c (389 aa).

Residues serine 28 to glycine 309 enclose the Brix domain. Residues glutamate 323–valine 350 are compositionally biased toward basic and acidic residues. The interval glutamate 323–glutamate 389 is disordered. Residues arginine 351 to aspartate 362 are compositionally biased toward basic residues. Serine 377 is modified (phosphoserine). The span at asparagine 379–glutamate 389 shows a compositional bias: polar residues.

This chain is Brix domain-containing protein C1B9.03c, found in Schizosaccharomyces pombe (strain 972 / ATCC 24843) (Fission yeast).